We begin with the raw amino-acid sequence, 135 residues long: Large ribosomal subunit protein bL19 (135 aa).

It belongs to the bacterial ribosomal protein bL19 family.

This protein is located at the 30S-50S ribosomal subunit interface and may play a role in the structure and function of the aminoacyl-tRNA binding site. This chain is Large ribosomal subunit protein bL19, found in Xanthomonas euvesicatoria pv. vesicatoria (strain 85-10) (Xanthomonas campestris pv. vesicatoria).